The chain runs to 250 residues: Diphthine synthase (250 aa).

Residues Leu9, Asp85, Val88, Ser113–Ile114, Leu165, Ala202, and His227 each bind S-adenosyl-L-methionine.

It belongs to the diphthine synthase family. Homodimer.

The enzyme catalyses 2-[(3S)-amino-3-carboxypropyl]-L-histidyl-[translation elongation factor 2] + 3 S-adenosyl-L-methionine = diphthine-[translation elongation factor 2] + 3 S-adenosyl-L-homocysteine + 3 H(+). It functions in the pathway protein modification; peptidyl-diphthamide biosynthesis. S-adenosyl-L-methionine-dependent methyltransferase that catalyzes the trimethylation of the amino group of the modified target histidine residue in translation elongation factor 2 (EF-2), to form an intermediate called diphthine. The three successive methylation reactions represent the second step of diphthamide biosynthesis. This Methanoregula boonei (strain DSM 21154 / JCM 14090 / 6A8) protein is Diphthine synthase.